The primary structure comprises 512 residues: Glycerol kinase 2 (512 aa).

Residue Thr18 participates in ADP binding. ATP is bound by residues Thr18, Thr19, and Ser20. Thr18 lines the sn-glycerol 3-phosphate pocket. Arg22 provides a ligand contact to ADP. Positions 88, 89, 140, and 255 each coordinate sn-glycerol 3-phosphate. Residues Arg88, Glu89, Tyr140, Asp255, and Gln256 each coordinate glycerol. Residues Thr277 and Gly321 each contribute to the ADP site. Residues Thr277, Gly321, Gln325, and Gly422 each coordinate ATP. ADP is bound by residues Gly422 and Asn426.

The protein belongs to the FGGY kinase family.

The enzyme catalyses glycerol + ATP = sn-glycerol 3-phosphate + ADP + H(+). It functions in the pathway polyol metabolism; glycerol degradation via glycerol kinase pathway; sn-glycerol 3-phosphate from glycerol: step 1/1. Its activity is regulated as follows. Inhibited by fructose 1,6-bisphosphate (FBP). In terms of biological role, key enzyme in the regulation of glycerol uptake and metabolism. Catalyzes the phosphorylation of glycerol to yield sn-glycerol 3-phosphate. This is Glycerol kinase 2 from Streptomyces coelicolor (strain ATCC BAA-471 / A3(2) / M145).